The chain runs to 212 residues: Uridine kinase (212 aa).

Gly13 to Ser20 provides a ligand contact to ATP.

Belongs to the uridine kinase family.

The protein resides in the cytoplasm. It catalyses the reaction uridine + ATP = UMP + ADP + H(+). The catalysed reaction is cytidine + ATP = CMP + ADP + H(+). It functions in the pathway pyrimidine metabolism; CTP biosynthesis via salvage pathway; CTP from cytidine: step 1/3. The protein operates within pyrimidine metabolism; UMP biosynthesis via salvage pathway; UMP from uridine: step 1/1. In Shewanella baltica (strain OS155 / ATCC BAA-1091), this protein is Uridine kinase.